The primary structure comprises 282 residues: Small ribosomal subunit protein uS3 (282 aa).

The 69-residue stretch at isoleucine 43 to lysine 111 folds into the KH type-2 domain. The tract at residues alanine 217 to alanine 282 is disordered. The span at arginine 228 to alanine 240 shows a compositional bias: basic and acidic residues. A compositionally biased stretch (low complexity) spans alanine 256–threonine 269.

It belongs to the universal ribosomal protein uS3 family. As to quaternary structure, part of the 30S ribosomal subunit. Forms a tight complex with proteins S10 and S14.

Functionally, binds the lower part of the 30S subunit head. Binds mRNA in the 70S ribosome, positioning it for translation. The polypeptide is Small ribosomal subunit protein uS3 (Kineococcus radiotolerans (strain ATCC BAA-149 / DSM 14245 / SRS30216)).